The primary structure comprises 336 residues: F420-dependent glucose-6-phosphate dehydrogenase (336 aa).

Aspartate 37 is a binding site for coenzyme F420-(gamma-Glu)n. Histidine 38 serves as the catalytic Proton donor. Coenzyme F420-(gamma-Glu)n is bound by residues threonine 74 and 105 to 106; that span reads SG. Glutamate 107 serves as the catalytic Proton acceptor. Coenzyme F420-(gamma-Glu)n-binding positions include asparagine 110, 173-174, and 176-177; these read SG and SA. Substrate-binding residues include threonine 191, lysine 194, lysine 255, and arginine 279.

It belongs to the F420-dependent glucose-6-phosphate dehydrogenase family. In terms of assembly, homodimer.

It carries out the reaction oxidized coenzyme F420-(gamma-L-Glu)(n) + D-glucose 6-phosphate + H(+) = 6-phospho-D-glucono-1,5-lactone + reduced coenzyme F420-(gamma-L-Glu)(n). In terms of biological role, catalyzes the coenzyme F420-dependent oxidation of glucose 6-phosphate (G6P) to 6-phosphogluconolactone. In Beutenbergia cavernae (strain ATCC BAA-8 / DSM 12333 / CCUG 43141 / JCM 11478 / NBRC 16432 / NCIMB 13614 / HKI 0122), this protein is F420-dependent glucose-6-phosphate dehydrogenase.